A 380-amino-acid polypeptide reads, in one-letter code: Protein neprosin (380 aa).

The signal sequence occupies residues 1 to 24 (MQAKFFTFVILSSVFYFNYPLAEA). Residues 25 to 128 (RSIQARLANK…QFPNLKFAPP (104 aa)) constitute a propeptide, activation peptide. Cys52 and Cys98 are joined by a disulfide. 3 N-linked (GlcNAc...) asparagine glycosylation sites follow: Asn68, Asn145, and Asn152. The Neprosin PEP catalytic domain occupies 129-380 (SANTNHQYAV…YLFYGGPGCQ (252 aa)). Glu188 is a catalytic residue. Cysteines 219 and 224 form a disulfide. A glycan (N-linked (GlcNAc...) asparagine) is linked at Asn253. Residue Glu297 is part of the active site. A disulfide bond links Cys358 and Cys379.

It belongs to the peptidase G3 family.

It is found in the secreted. The catalysed reaction is Hydrolysis of Pro-|-Xaa &gt;&gt; Ala-|-Xaa in oligopeptides.. Its activity is regulated as follows. Weakly inhibited by the aspartic protease inhibitor pepstatin. Weakly inhibited by pepstatin A (IC(50) of 140 uM) and 1,2-epoxy-3-(p-nitrophenoxy)propane (EPNP) (IC(50) of 480 uM). Activity is not affected by the POP inhibitor Z-Pro-prolinal inhibitor or the denaturant urea. Its function is as follows. Glutamic endopeptidase that preferentially cleaves peptide bonds on the C-terminal side of proline residues. Also cleaves peptide bonds on the C-terminal side of alanine residues but with less efficiency. In contrast to most proline-cleaving enzymes, effectively degrades proteins of any size. Found in the viscoelastic fluid of the pitcher, and so likely functions in the digestion of their prey. This Nepenthes x ventrata (Red tropical pitcher plant) protein is Protein neprosin.